A 586-amino-acid polypeptide reads, in one-letter code: uncharacterized protein (586 aa).

Residues M1–D115 are disordered. A compositionally biased stretch (basic and acidic residues) spans T8 to E20. The segment covering V21–G31 has biased composition (polar residues). Residues Y35–P44 are compositionally biased toward basic and acidic residues. Residues T76 to T107 show a composition bias toward polar residues. WD repeat units follow at residues Q184–E223, G253–V291, R293–W333, E335–S374, C387–K430, and S432–A474.

It is found in the cytoplasm. Its subcellular location is the nucleus. This is an uncharacterized protein from Schizosaccharomyces pombe (strain 972 / ATCC 24843) (Fission yeast).